Here is a 446-residue protein sequence, read N- to C-terminus: GRAM domain-containing protein 2B (446 aa).

Met1 carries the N-acetylmethionine modification. The segment at 1 to 120 is disordered; the sequence is MVKKRLPSND…RKKSSSSSQY (120 aa). Residues 29-43 show a composition bias toward low complexity; sequence SRSSTDSPSSVFFSS. A compositionally biased stretch (basic and acidic residues) spans 95–113; the sequence is DKNDCKTESKNDPKTERKK. One can recognise a GRAM domain in the interval 124–191; it reads MHFHKLFLSV…FSVTLIKKTK (68 aa). Over residues 234 to 247 the composition is skewed to polar residues; that stretch reads TSVGNSPNPSSAEN. Residues 234-253 form a disordered region; it reads TSVGNSPNPSSAENSFRADR. Ser239, Ser256, and Ser266 each carry phosphoserine. The tract at residues 276-298 is disordered; that stretch reads RQDMEGYSSSGSQTPESENSRDF. Over residues 282 to 292 the composition is skewed to polar residues; the sequence is YSSSGSQTPES.

This Pongo abelii (Sumatran orangutan) protein is GRAM domain-containing protein 2B (GRAMD2B).